The sequence spans 692 residues: Elongation factor G 2 (692 aa).

In terms of domain architecture, tr-type G spans 8–283 (EKTRNIGIMA…SVVAYLPSPL (276 aa)). Residues 17-24 (AHIDAGKT), 81-85 (DTPGH), and 135-138 (NKMD) each bind GTP.

It belongs to the TRAFAC class translation factor GTPase superfamily. Classic translation factor GTPase family. EF-G/EF-2 subfamily.

It is found in the cytoplasm. Its function is as follows. Catalyzes the GTP-dependent ribosomal translocation step during translation elongation. During this step, the ribosome changes from the pre-translocational (PRE) to the post-translocational (POST) state as the newly formed A-site-bound peptidyl-tRNA and P-site-bound deacylated tRNA move to the P and E sites, respectively. Catalyzes the coordinated movement of the two tRNA molecules, the mRNA and conformational changes in the ribosome. This Geobacter sulfurreducens (strain ATCC 51573 / DSM 12127 / PCA) protein is Elongation factor G 2.